Here is a 372-residue protein sequence, read N- to C-terminus: Methenyltetrahydrofolate synthase domain-containing protein (372 aa).

The segment covering 246-258 (KQAGKDVTLRDEP) has biased composition (basic and acidic residues). Residues 246–289 (KQAGKDVTLRDEPGSQQPAPGPIRRPQDRPQTGSRGGSRSPLQG) form a disordered region. Positions 296 to 369 (ATVCVGNLPF…NALRVSLGQQ (74 aa)) constitute an RRM domain.

The polypeptide is Methenyltetrahydrofolate synthase domain-containing protein (Mthfsd) (Mus musculus (Mouse)).